Consider the following 759-residue polypeptide: Rho GTPase-activating protein 26 (759 aa).

The BAR domain maps to 7–262; the sequence is EFSDCYLDSP…MKENPHEHLA (256 aa). The PH domain maps to 265–369; the sequence is PYTMEGYLYV…WMEAMDGREP (105 aa). A Rho-GAP domain is found at 383 to 568; the sequence is AQLDNIGFSI…IIIENYEKMF (186 aa). The disordered stretch occupies residues 578–701; sequence NSQLHLSRKR…STSSDSSPVS (124 aa). Basic and acidic residues predominate over residues 608 to 617; sequence HNTEKEEKRN. The span at 618 to 637 shows a compositional bias: low complexity; that stretch reads SVNSSAESVSSSNANSSANS. Residues 638–650 are compositionally biased toward polar residues; that stretch reads TCTQCSNMNNLNA. The segment covering 679–701 has biased composition (low complexity); it reads PMFSAPSSPMPTSSTSSDSSPVS. Positions 701 to 759 constitute an SH3 domain; sequence SVPRKAKALYACKAEHDSELSFSAGTVFDNVYPSQEPGWLEGILNGKTGLIPENYVEFL.

The protein localises to the cell junction. It localises to the focal adhesion. It is found in the cytoplasm. The protein resides in the cytoskeleton. Its subcellular location is the endosome membrane. GTPase-activating protein for rhoa and cdc42. The chain is Rho GTPase-activating protein 26 (arhgap26) from Xenopus tropicalis (Western clawed frog).